We begin with the raw amino-acid sequence, 36 residues long: Photosystem II reaction center protein Y (36 aa).

Over 1–4 the chain is Lumenal; sequence MDSR. A helical membrane pass occupies residues 5-23; that stretch reads LLVVLIPVLAAASWAVYNI. Residues 24–36 lie on the Stromal side of the membrane; it reads GRVALQQFRKMTS.

The protein belongs to the PsbY family. As to quaternary structure, PSII is composed of 1 copy each of membrane proteins PsbA, PsbB, PsbC, PsbD, PsbE, PsbF, PsbH, PsbI, PsbJ, PsbK, PsbL, PsbM, PsbT, PsbX, PsbY, PsbZ, Psb30/Ycf12, at least 3 peripheral proteins of the oxygen-evolving complex and a large number of cofactors. It forms dimeric complexes.

The protein localises to the plastid. It localises to the chloroplast thylakoid membrane. Functionally, loosely associated component of the core of photosystem II (PSII), it is not always seen in crystals. PSII is a light-driven water plastoquinone oxidoreductase, using light energy to abstract electrons from H(2)O, generating a proton gradient subsequently used for ATP formation. This chain is Photosystem II reaction center protein Y, found in Pyropia yezoensis (Susabi-nori).